The sequence spans 95 residues: uncharacterized protein (95 aa).

This is an uncharacterized protein from Saccharomyces cerevisiae (strain ATCC 204508 / S288c) (Baker's yeast).